Reading from the N-terminus, the 250-residue chain is Virulence plasmid protein pGP6-D-related protein (250 aa).

Belongs to the UPF0137 (pGP6-D) family.

The sequence is that of Virulence plasmid protein pGP6-D-related protein from Chlamydia pneumoniae (Chlamydophila pneumoniae).